A 386-amino-acid polypeptide reads, in one-letter code: D(1)-like dopamine receptor (386 aa).

Positions 1–10 (MEIFTTTRGT) are enriched in polar residues. A disordered region spans residues 1–28 (MEIFTTTRGTSAGPEPAPGGHGGTDSPR). Residues 1 to 35 (MEIFTTTRGTSAGPEPAPGGHGGTDSPRTSDLSLR) are Extracellular-facing. Residues 36–56 (ALTGCVLCILIVSTLLGNALV) traverse the membrane as a helical segment. Over 57–72 (CAAVIKFRHLRSKVTN) the chain is Cytoplasmic. The chain crosses the membrane as a helical span at residues 73 to 92 (AFVISLAVSDLFVAVLVMPW). The Extracellular segment spans residues 93-109 (RAVSEVAGVWLFGAFCD). Cysteine 108 and cysteine 188 are joined by a disulfide. The chain crosses the membrane as a helical span at residues 110 to 131 (TWVAFDIMCSTASILHLCIISM). The Cytoplasmic portion of the chain corresponds to 132–150 (DRYWAISSPFRYERRMTPR). Residues 151–175 (FGCVMIGVAWTLSVLISFIPVQLNW) form a helical membrane-spanning segment. At 176–195 (HARGRERTDPGDCNASLNRT) the chain is on the extracellular side. Residues asparagine 189 and asparagine 193 are each glycosylated (N-linked (GlcNAc...) asparagine). A helical membrane pass occupies residues 196–220 (YAISSSLISFYIPVLIMVGTYTRIF). The Cytoplasmic segment spans residues 221–266 (RIGRTQIRRISSLERAAPRATRGPALCDEESSLKTSFRRETKVLKT). A helical transmembrane segment spans residues 267–292 (LSVIMGVFVFCWLPFFVLNCMVPFCR). The Extracellular segment spans residues 293-305 (LEPAAAPCVSDTT). Residues 306–325 (FSVFVWFGWANSSLNPVIYA) form a helical membrane-spanning segment. Residues 326–386 (FNADFRKAFS…SRGGPYQFAL (61 aa)) are Cytoplasmic-facing.

This sequence belongs to the G-protein coupled receptor 1 family.

Its subcellular location is the cell membrane. It localises to the cell projection. It is found in the cilium membrane. Its function is as follows. This is one of the five types (D1 to D5) of receptors for dopamine. The activity of this receptor is mediated by G proteins which activate adenylyl cyclase. This chain is D(1)-like dopamine receptor, found in Oreochromis mossambicus (Mozambique tilapia).